The primary structure comprises 180 residues: Putative 5'(3')-deoxyribonucleotidase (180 aa).

The active-site Nucleophile is the aspartate 9. Mg(2+) contacts are provided by aspartate 9, aspartate 11, and aspartate 135. Aspartate 11 acts as the Proton donor in catalysis.

It belongs to the 5'(3')-deoxyribonucleotidase family. It depends on Mg(2+) as a cofactor.

Dephosphorylates the 5' and 2'(3')-phosphates of deoxyribonucleotides. This Staphylococcus aureus (strain Mu50 / ATCC 700699) protein is Putative 5'(3')-deoxyribonucleotidase.